The following is a 490-amino-acid chain: Ribulose bisphosphate carboxylase large chain (490 aa).

Positions 127 and 177 each coordinate substrate. K179 functions as the Proton acceptor in the catalytic mechanism. K181 contributes to the substrate binding site. K205, D207, and E208 together coordinate Mg(2+). K205 carries the post-translational modification N6-carboxylysine. H297 acts as the Proton acceptor in catalysis. Residues R298, H330, and S382 each contribute to the substrate site.

Belongs to the RuBisCO large chain family. Type I subfamily. In terms of assembly, heterohexadecamer of 8 large chains and 8 small chains. Mg(2+) is required as a cofactor.

It localises to the plastid. The protein resides in the chloroplast. It catalyses the reaction 2 (2R)-3-phosphoglycerate + 2 H(+) = D-ribulose 1,5-bisphosphate + CO2 + H2O. The enzyme catalyses D-ribulose 1,5-bisphosphate + O2 = 2-phosphoglycolate + (2R)-3-phosphoglycerate + 2 H(+). Its function is as follows. RuBisCO catalyzes two reactions: the carboxylation of D-ribulose 1,5-bisphosphate, the primary event in carbon dioxide fixation, as well as the oxidative fragmentation of the pentose substrate in the photorespiration process. Both reactions occur simultaneously and in competition at the same active site. This is Ribulose bisphosphate carboxylase large chain from Thalassiosira nordenskioeldii (Marine diatom).